Consider the following 482-residue polypeptide: Dihydrolipoyllysine-residue acetyltransferase component of pyruvate dehydrogenase complex, mitochondrial (482 aa).

Residues 1 to 28 (MSAFVRVVPRISRSSVLTRSLRLQLRCY) constitute a mitochondrion transit peptide. The Lipoyl-binding domain maps to 34–110 (HTIIGMPALS…PVNKPIAVYV (77 aa)). Lys75 is subject to N6-lipoyllysine. Positions 122-170 (FKLEDSGSDSKTSTKAQPAEPQAEKKQEAPAEETKTSAPEAKKSDVAAP) are disordered. A compositionally biased stretch (basic and acidic residues) spans 143 to 166 (QAEKKQEAPAEETKTSAPEAKKSD). Positions 175–212 (FASPLAKTIALEKGISLKDVHGTGPRGRITKADIESYL) constitute a Peripheral subunit-binding (PSBD) domain. A disordered region spans residues 214-251 (KSSKQSSQTSGAAAATPAAATSSTTAGSAPSPSSTASY). Residues 217–250 (KQSSQTSGAAAATPAAATSSTTAGSAPSPSSTAS) are compositionally biased toward low complexity. Catalysis depends on residues His455 and Asp459.

Belongs to the 2-oxoacid dehydrogenase family. In terms of assembly, eukaryotic pyruvate dehydrogenase (PDH) complexes are organized as a core consisting of the oligomeric dihydrolipoamide acetyl-transferase (E2), around which are arranged multiple copies of pyruvate dehydrogenase (E1), dihydrolipoamide dehydrogenase (E3) and protein X (E3BP) bound by non-covalent bonds. (R)-lipoate serves as cofactor.

The protein localises to the mitochondrion matrix. It carries out the reaction N(6)-[(R)-dihydrolipoyl]-L-lysyl-[protein] + acetyl-CoA = N(6)-[(R)-S(8)-acetyldihydrolipoyl]-L-lysyl-[protein] + CoA. Functionally, the pyruvate dehydrogenase complex catalyzes the overall conversion of pyruvate to acetyl-CoA and CO(2). In Saccharomyces cerevisiae (strain ATCC 204508 / S288c) (Baker's yeast), this protein is Dihydrolipoyllysine-residue acetyltransferase component of pyruvate dehydrogenase complex, mitochondrial (LAT1).